The primary structure comprises 188 residues: Elongation factor P-like protein (188 aa).

This sequence belongs to the elongation factor P family.

This Aliivibrio fischeri (strain MJ11) (Vibrio fischeri) protein is Elongation factor P-like protein.